The chain runs to 93 residues: Cell division protein FtsB (93 aa).

Residues 1 to 3 (MRL) are Cytoplasmic-facing. A helical transmembrane segment spans residues 4-21 (FILSLFALLVMFQYDFWF). Residues 22–93 (GKNGYLDYQD…FYRIVKNKNR (72 aa)) are Periplasmic-facing. Positions 28–76 (DYQDIKAEIIQRKQENKKLSQRNQTIFAEIQDLKNGIEAIEERARMEHE) form a coiled coil.

The protein belongs to the FtsB family. Part of a complex composed of FtsB, FtsL and FtsQ.

The protein resides in the cell inner membrane. Its function is as follows. Essential cell division protein. May link together the upstream cell division proteins, which are predominantly cytoplasmic, with the downstream cell division proteins, which are predominantly periplasmic. The sequence is that of Cell division protein FtsB from Histophilus somni (strain 129Pt) (Haemophilus somnus).